Here is a 212-residue protein sequence, read N- to C-terminus: HTH-type transcriptional repressor KstR (212 aa).

Residues 1 to 11 show a composition bias toward low complexity; it reads MTTSSRSRSST. Residues 1–28 form a disordered region; the sequence is MTTSSRSRSSTVAAATLGEDDLSSNAQK. Residues 28–88 form the HTH tetR-type domain; sequence KERRKRILDA…SALAREFERI (61 aa). A DNA-binding region (H-T-H motif) is located at residues 51–70; that stretch reads QMRAVAERADVAVGTLYRYF.

As to quaternary structure, homodimer.

Controls the expression of genes used for utilizing diverse lipids as energy sources. This chain is HTH-type transcriptional repressor KstR (kstR), found in Rhodococcus jostii (strain RHA1).